Reading from the N-terminus, the 394-residue chain is Methane monooxygenase component A beta chain (394 aa).

M.trichosporium has two forms of methane monooxygenase, a soluble and a membrane-bound type. The soluble type consists of four components (A to D): protein A, comprising three chains, in an alpha-2, beta-2, gamma-2 configuration, is a nonheme iron protein containing an unusual mu-hydroxo bridge structure at its active site and interacts with both oxygen and methane.

The enzyme catalyses methane + NADH + O2 + H(+) = methanol + NAD(+) + H2O. The catalysed reaction is methane + NADPH + O2 + H(+) = methanol + NADP(+) + H2O. In terms of biological role, responsible for the initial oxygenation of methane to methanol in methanotrophs. It also catalyzes the monohydroxylation of a variety of unactivated alkenes, alicyclic, aromatic and heterocyclic compounds. The protein is Methane monooxygenase component A beta chain (mmoY) of Methylosinus trichosporium.